The following is a 139-amino-acid chain: uncharacterized protein (139 aa).

This is an uncharacterized protein from Ostreid herpesvirus 1 (isolate France) (OsHV-1).